The following is a 181-amino-acid chain: Protein Syd (181 aa).

The protein belongs to the Syd family.

Its subcellular location is the cell inner membrane. Interacts with the SecY protein in vivo. May bind preferentially to an uncomplexed state of SecY, thus functioning either as a chelating agent for excess SecY in the cell or as a regulatory factor that negatively controls the translocase function. This chain is Protein Syd, found in Shigella flexneri.